A 156-amino-acid chain; its full sequence is Transcription antitermination protein NusB (156 aa).

It belongs to the NusB family.

Its function is as follows. Involved in transcription antitermination. Required for transcription of ribosomal RNA (rRNA) genes. Binds specifically to the boxA antiterminator sequence of the ribosomal RNA (rrn) operons. In Mycobacterium tuberculosis (strain CDC 1551 / Oshkosh), this protein is Transcription antitermination protein NusB.